Consider the following 494-residue polypeptide: Splicing regulatory glutamine/lysine-rich protein 1 (494 aa).

The RRM domain maps to 69–145 (RTVYVGNLNS…RPLKINHSNN (77 aa)). Residues Ser174 and Ser187 each carry the phosphoserine modification. The segment at 176–494 (ISAAIEPESG…ERLCSTADAV (319 aa)) is disordered. Residues 183–192 (ESGKSNERKG) show a composition bias toward basic and acidic residues. Composition is skewed to basic residues over residues 193 to 230 (GRSRSHTRSKSRSSSKSHSRRKRSQSKHRSRSHNRSRS) and 238 to 262 (SKSPHKKRSKSRERRKSRSRSRSRD). The span at 263-340 (KRKDTREKVK…DRSKEADEKR (78 aa)) shows a compositional bias: basic and acidic residues. Position 348 is a phosphothreonine (Thr348). A compositionally biased stretch (basic residues) spans 357–373 (RRSRSASRERRRRRSRS). Basic and acidic residues-rich tracts occupy residues 404–453 (REKE…KEAD) and 463–474 (KDTARTEEESKA).

This sequence belongs to the splicing factor SR family. Interacts with SREK1IP1. Homodimer. Binds SFRS1, SFRS2, SFRS3 and SFRS6. Interacts with the spliceosome. In terms of tissue distribution, ubiquitous. Detected in liver, brain, lung, spleen, testis and pancreas.

It localises to the nucleus. Participates in the regulation of alternative splicing by modulating the activity of other splice facors. Inhibits the splicing activity of SFRS1, SFRS2 and SFRS6. Augments the splicing activity of SFRS3. The polypeptide is Splicing regulatory glutamine/lysine-rich protein 1 (Srek1) (Rattus norvegicus (Rat)).